The following is a 600-amino-acid chain: Proline--tRNA ligase (600 aa).

The protein belongs to the class-II aminoacyl-tRNA synthetase family. ProS type 1 subfamily. In terms of assembly, homodimer.

The protein resides in the cytoplasm. The catalysed reaction is tRNA(Pro) + L-proline + ATP = L-prolyl-tRNA(Pro) + AMP + diphosphate. In terms of biological role, catalyzes the attachment of proline to tRNA(Pro) in a two-step reaction: proline is first activated by ATP to form Pro-AMP and then transferred to the acceptor end of tRNA(Pro). As ProRS can inadvertently accommodate and process non-cognate amino acids such as alanine and cysteine, to avoid such errors it has two additional distinct editing activities against alanine. One activity is designated as 'pretransfer' editing and involves the tRNA(Pro)-independent hydrolysis of activated Ala-AMP. The other activity is designated 'posttransfer' editing and involves deacylation of mischarged Ala-tRNA(Pro). The misacylated Cys-tRNA(Pro) is not edited by ProRS. This chain is Proline--tRNA ligase, found in Acaryochloris marina (strain MBIC 11017).